A 247-amino-acid polypeptide reads, in one-letter code: 3,4-dihydroxy-2-butanone 4-phosphate synthase (247 aa).

D-ribulose 5-phosphate contacts are provided by residues 38-39, D43, 179-183, and E203; these read RE and RMGQT. Residue E39 coordinates Mg(2+).

The protein belongs to the DHBP synthase family. As to quaternary structure, homodimer. Mg(2+) is required as a cofactor. Requires Mn(2+) as cofactor.

It carries out the reaction D-ribulose 5-phosphate = (2S)-2-hydroxy-3-oxobutyl phosphate + formate + H(+). It functions in the pathway cofactor biosynthesis; riboflavin biosynthesis; 2-hydroxy-3-oxobutyl phosphate from D-ribulose 5-phosphate: step 1/1. In terms of biological role, catalyzes the conversion of D-ribulose 5-phosphate to formate and 3,4-dihydroxy-2-butanone 4-phosphate. This Methanosarcina acetivorans (strain ATCC 35395 / DSM 2834 / JCM 12185 / C2A) protein is 3,4-dihydroxy-2-butanone 4-phosphate synthase.